The primary structure comprises 66 residues: ATP synthase protein 8 (66 aa).

Residues 8–24 (PWPMVIMSMILTLFYIT) form a helical membrane-spanning segment. K54 is modified (N6-acetyllysine; alternate). N6-succinyllysine; alternate is present on K54. An N6-acetyllysine modification is found at K57.

The protein belongs to the ATPase protein 8 family. In terms of assembly, F-type ATPases have 2 components, CF(1) - the catalytic core - and CF(0) - the membrane proton channel. Component of an ATP synthase complex composed of ATP5PB, ATP5MC1, ATP5F1E, ATP5PD, ATP5ME, ATP5PF, ATP5MF, MT-ATP6, MT-ATP8, ATP5F1A, ATP5F1B, ATP5F1D, ATP5F1C, ATP5PO, ATP5MG, ATP5MK and ATP5MJ. Interacts with PRICKLE3.

It localises to the mitochondrion membrane. Mitochondrial membrane ATP synthase (F(1)F(0) ATP synthase or Complex V) produces ATP from ADP in the presence of a proton gradient across the membrane which is generated by electron transport complexes of the respiratory chain. F-type ATPases consist of two structural domains, F(1) - containing the extramembraneous catalytic core and F(0) - containing the membrane proton channel, linked together by a central stalk and a peripheral stalk. During catalysis, ATP synthesis in the catalytic domain of F(1) is coupled via a rotary mechanism of the central stalk subunits to proton translocation. Part of the complex F(0) domain. Minor subunit located with subunit a in the membrane. This is ATP synthase protein 8 (MT-ATP8) from Alouatta guariba (Brown howler monkey).